Here is a 144-residue protein sequence, read N- to C-terminus: Maximins 1/H1 (144 aa).

Positions 1–18 are cleaved as a signal peptide; sequence MNFKYIVAVSFLLASAYA. Residues 19–43 constitute a propeptide that is removed on maturation; the sequence is RSEENDEQSLSQRDVLEEESLREIR. Asn70 is subject to Asparagine amide. The propeptide occupies 74–123; sequence TAEEHEVMKRLEAVMRDLDSLDYPEEAAERETRSFNQEEIANLFTKKEKR. Leucine amide is present on Leu143.

Belongs to the bombinin family. In terms of tissue distribution, expressed by the skin glands.

The protein localises to the secreted. Its function is as follows. Antibacterial peptide with amphipathic alpha-helical structure that has activity against both Gram-positive and Gram-negative bacteria. Also shows antimicrobial activity against the fungus C.albicans, but not against A.flavus nor P.uticale. It has little hemolytic activity. It possess a significant cytotoxicity against tumor cell lines, but does not possess a significant anti-HIV activity. Also shows high spermicidal activity. In terms of biological role, antibacterial peptide with activity against both Gram-positive and Gram-negative bacteria. Also shows antimicrobial activity against the fungus C.albicans. In addition, shows strong hemolytic activity. This Bombina maxima (Giant fire-bellied toad) protein is Maximins 1/H1.